Consider the following 521-residue polypeptide: Glutamate--cysteine ligase (521 aa).

This sequence belongs to the glutamate--cysteine ligase type 1 family. Type 1 subfamily.

The enzyme catalyses L-cysteine + L-glutamate + ATP = gamma-L-glutamyl-L-cysteine + ADP + phosphate + H(+). The protein operates within sulfur metabolism; glutathione biosynthesis; glutathione from L-cysteine and L-glutamate: step 1/2. The chain is Glutamate--cysteine ligase from Aliivibrio fischeri (strain MJ11) (Vibrio fischeri).